The sequence spans 368 residues: Protein-glutamate methylesterase/protein-glutamine glutaminase (368 aa).

Residues 9-126 (RVLVVDDSAF…SINMRELKDE (118 aa)) enclose the Response regulatory domain. 4-aspartylphosphate is present on Asp-60. The CheB-type methylesterase domain occupies 161 to 354 (SVPARIAVAI…ETVVRAVEMI (194 aa)). Active-site residues include Ser-173, His-200, and Asp-296.

It belongs to the CheB family. In terms of processing, phosphorylated by CheA. Phosphorylation of the N-terminal regulatory domain activates the methylesterase activity.

Its subcellular location is the cytoplasm. It carries out the reaction [protein]-L-glutamate 5-O-methyl ester + H2O = L-glutamyl-[protein] + methanol + H(+). The enzyme catalyses L-glutaminyl-[protein] + H2O = L-glutamyl-[protein] + NH4(+). Involved in chemotaxis. Part of a chemotaxis signal transduction system that modulates chemotaxis in response to various stimuli. Catalyzes the demethylation of specific methylglutamate residues introduced into the chemoreceptors (methyl-accepting chemotaxis proteins or MCP) by CheR. Also mediates the irreversible deamidation of specific glutamine residues to glutamic acid. This is Protein-glutamate methylesterase/protein-glutamine glutaminase from Pyrococcus abyssi (strain GE5 / Orsay).